Here is a 357-residue protein sequence, read N- to C-terminus: Non-structural protein NS2 (357 aa).

2 disordered regions span residues 169-191 and 229-266; these read PRLQ…DEAK and DERD…HPKT. The span at 233–249 shows a compositional bias: basic and acidic residues; it reads EGDRDERGDEEQVKTLS. The segment covering 250–260 has biased composition (acidic residues); the sequence is DDDDQGEDASD.

Belongs to the orbivirus non-structural protein NS2 family.

Its function is as follows. Single-stranded RNA-binding protein. This is Non-structural protein NS2 (Segment-8) from Antilocapra americana (Pronghorn).